The primary structure comprises 484 residues: Poly(A) RNA polymerase GLD2 (484 aa).

Ser-62 and Ser-69 each carry phosphoserine. Residues 76–92 (KRLSDEKNLPLDGKRQR) carry the Nuclear localization signal motif. Phosphoserine is present on Ser-95. Residues Asp-213 and Asp-215 each coordinate Mg(2+). The PAP-associated domain maps to 386–440 (NLGDLLLGFLKYYATEFDWNSQMISVREAKAIPRPDGIEWRNKYICVEEPFDGTN).

It belongs to the DNA polymerase type-B-like family. GLD2 subfamily. As to quaternary structure, interacts with CPEB1, CPEB2, CPSF1 and PABPC1. Interacts with QKI isoform QKI7; promoting recruitment to miRNA miR-122 and miR-122 stabilization. It depends on Mg(2+) as a cofactor. Mn(2+) is required as a cofactor.

The protein resides in the cytoplasm. Its subcellular location is the nucleus. The catalysed reaction is RNA(n) + ATP = RNA(n)-3'-adenine ribonucleotide + diphosphate. Its function is as follows. Cytoplasmic poly(A) RNA polymerase that adds successive AMP monomers to the 3'-end of specific RNAs, forming a poly(A) tail. In contrast to the canonical nuclear poly(A) RNA polymerase, it only adds poly(A) to selected cytoplasmic mRNAs. Does not play a role in replication-dependent histone mRNA degradation. Adds a single nucleotide to the 3' end of specific miRNAs, monoadenylation stabilizes and prolongs the activity of some but not all miRNAs. This chain is Poly(A) RNA polymerase GLD2, found in Bos taurus (Bovine).